Consider the following 215-residue polypeptide: Kinetochore protein Spc25 (215 aa).

Residues 43-114 adopt a coiled-coil conformation; the sequence is DNLLTAMEKA…MECIHALKRA (72 aa).

It belongs to the SPC25 family. As to quaternary structure, component of the Ndc80 complex, which is composed of Ndc80, Nuf2 and Spc25.

It is found in the nucleus. It localises to the chromosome. The protein localises to the centromere. Its subcellular location is the kinetochore. Functionally, acts as a component of the essential kinetochore-associated Ndc80 complex, which is required for chromosome segregation and spindle checkpoint activity during meiosis and mitosis. Required for kinetochore integrity and the organization of stable microtubule binding sites in the outer plate of the kinetochore. Participates in SAC signaling that responds specifically to disruptions in spindle microtubule dynamics. The NDC80 complex synergistically enhances the affinity of the SKA1 complex for microtubules and may allow the NDC80 complex to track depolymerizing microtubules. The chain is Kinetochore protein Spc25 from Drosophila ananassae (Fruit fly).